The chain runs to 390 residues: Lipid droplet-regulating VLDL assembly factor AUP1 homolog (390 aa).

The Cytoplasmic segment spans residues 1 to 32; the sequence is MASPEASSSGNTEDLRIEDLFHQKRNEDTIAK. Residues 33-53 lie within the membrane without spanning it; sequence IFSIIYAPVGLIILLIRVFLG. At 54 to 390 the chain is on the cytoplasmic side; it reads FHTFIVACLL…NRQKYMNRDS (337 aa). Residues 305–347 enclose the CUE domain; it reads QMDECAMRIKQSFPSFHLSAIRRDLEKTRSQTTTVNNLKAGKI.

The protein belongs to the AUP1 family.

It is found in the endoplasmic reticulum membrane. The protein resides in the lipid droplet. The protein is Lipid droplet-regulating VLDL assembly factor AUP1 homolog of Caenorhabditis elegans.